The primary structure comprises 67 residues: Cell division protein ZapB (67 aa).

Positions 3 to 59 form a coiled coil; it reads LELLSKLETKIQTALETIELLKMELEEEKQKSIGLAEQNQQLSQDLNSWNEKVTGLV.

Belongs to the ZapB family. In terms of assembly, homodimer. The ends of the coiled-coil dimer bind to each other, forming polymers. Interacts with FtsZ.

It localises to the cytoplasm. Its function is as follows. Non-essential, abundant cell division factor that is required for proper Z-ring formation. It is recruited early to the divisome by direct interaction with FtsZ, stimulating Z-ring assembly and thereby promoting cell division earlier in the cell cycle. Its recruitment to the Z-ring requires functional FtsA or ZipA. The chain is Cell division protein ZapB from Shewanella woodyi (strain ATCC 51908 / MS32).